The chain runs to 456 residues: Aminotransferase ALD1, chloroplastic (456 aa).

The N-terminal 43 residues, 1-43 (MVSLMFFSSASPLCSSPSKIPKASLDFEMKKLGGSTKLVRNVN), are a transit peptide targeting the chloroplast. Pyridoxal 5'-phosphate is bound by residues Tyr-108, 142–143 (AQ), Asn-223, Asp-251, Tyr-254, Ser-281, Ser-283, Arg-292, and Asn-323.

It belongs to the class-I pyridoxal-phosphate-dependent aminotransferase family. LL-diaminopimelate aminotransferase subfamily. The cofactor is pyridoxal 5'-phosphate. Highly expressed in senescing leaves, flowers, siliques and seeds.

Its subcellular location is the plastid. The protein resides in the chloroplast. Aminotransferase involved in local and systemic acquired resistance (SAR) to the bacterial pathogen P.syringae. Required for salicylic acid (SA) and camalexin accumulation upon pathogen infection. Possesses aminotransferase activity in vitro and may generate amino-acid-derived defense signals in vivo. May be involved in ethylene-induced senescence signaling. Involved in the biosynthesis of pipecolate (Pip), a metabolite that orchestrates defense amplification, positive regulation of SA biosynthesis, and priming to guarantee effective local resistance induction and the establishment of SAR. Converts lysine to alpha-keto-epsilon-aminocaproate, which then can spontaneously cyclize to form delta-(1)-piperideine-2-carboxylate (P2C). P2C is converted to Pip by SARD4. May produce non-Pip metabolites that play roles in immunity. Involved in the synthesis of distinct metabolite signals that affect basal and early defenses, and later defense responses. The sequence is that of Aminotransferase ALD1, chloroplastic from Arabidopsis thaliana (Mouse-ear cress).